A 248-amino-acid chain; its full sequence is DNA polymerase sliding clamp 2 (248 aa).

This sequence belongs to the PCNA family. As to quaternary structure, homotrimer. The subunits circularize to form a toroid; DNA passes through its center. Replication factor C (RFC) is required to load the toroid on the DNA.

Sliding clamp subunit that acts as a moving platform for DNA processing. Responsible for tethering the catalytic subunit of DNA polymerase and other proteins to DNA during high-speed replication. The polypeptide is DNA polymerase sliding clamp 2 (Sulfurisphaera ohwakuensis).